The following is a 751-amino-acid chain: Ribosome biogenesis protein ERB1 (751 aa).

Disordered regions lie at residues 1–140 and 289–336; these read MALT…GNVP and SEPS…DPED. Acidic residues-rich tracts occupy residues 34-92 and 119-129; these read LTDE…SDSD and IEPDYDSDSST. Positions 294 to 305 are enriched in pro residues; sequence SQPPPLPAPKRP. Over residues 323–336 the composition is skewed to basic and acidic residues; that stretch reads EEEKQEWLKQDPED. WD repeat units follow at residues 410–449, 536–580, 582–621, 622–661, 665–704, and 720–751; these read HPKG…EIRR, PSSG…APFK, IKGA…KTLQ, PGIR…KPYK, YHSR…DLMT, and TDGL…VWCS.

The protein belongs to the WD repeat BOP1/ERB1 family. Component of the NOP7 complex, composed of ERB1, NOP7 and YTM1. The complex is held together by ERB1, which interacts with NOP7 via its N-terminal domain and with YTM1 via a high-affinity interaction between the seven-bladed beta-propeller domains of the 2 proteins. The NOP7 complex associates with the 66S pre-ribosome.

Its subcellular location is the nucleus. The protein localises to the nucleolus. It localises to the nucleoplasm. In terms of biological role, component of the NOP7 complex, which is required for maturation of the 25S and 5.8S ribosomal RNAs and formation of the 60S ribosome. The sequence is that of Ribosome biogenesis protein ERB1 from Coprinopsis cinerea (strain Okayama-7 / 130 / ATCC MYA-4618 / FGSC 9003) (Inky cap fungus).